We begin with the raw amino-acid sequence, 95 residues long: Microcin E492 immunity protein (95 aa).

Transmembrane regions (helical) follow at residues 1 to 21 (MTLL…FCII), 35 to 55 (VIVL…TKVY), and 67 to 87 (YLFC…ILTI).

This sequence belongs to the MceB microcin immunity protein family.

It localises to the cell inner membrane. Its function is as follows. Protect the producing cell against microcin E492. This is Microcin E492 immunity protein from Klebsiella pneumoniae.